Consider the following 495-residue polypeptide: Protein YhjJ (495 aa).

The N-terminal stretch at 1–24 (MQGTKIRLLAGSLLMLASAGYVQA) is a signal peptide.

Belongs to the peptidase M16 family.

Its subcellular location is the periplasm. This chain is Protein YhjJ (yhjJ), found in Salmonella typhi.